The sequence spans 568 residues: Urease subunit alpha (568 aa).

In terms of domain architecture, Urease spans 130 to 568 (GGIDTHIHFI…LPMAQRYFLF (439 aa)). 3 residues coordinate Ni(2+): His135, His137, and Lys218. Lys218 carries the N6-carboxylysine modification. A substrate-binding site is contributed by His220. The Ni(2+) site is built by His247 and His273. His321 (proton donor) is an active-site residue. Asp361 provides a ligand contact to Ni(2+).

It belongs to the metallo-dependent hydrolases superfamily. Urease alpha subunit family. As to quaternary structure, heterotrimer of UreA (gamma), UreB (beta) and UreC (alpha) subunits. Three heterotrimers associate to form the active enzyme. It depends on Ni cation as a cofactor. In terms of processing, carboxylation allows a single lysine to coordinate two nickel ions.

The protein resides in the cytoplasm. The enzyme catalyses urea + 2 H2O + H(+) = hydrogencarbonate + 2 NH4(+). It functions in the pathway nitrogen metabolism; urea degradation; CO(2) and NH(3) from urea (urease route): step 1/1. The protein is Urease subunit alpha of Burkholderia mallei (strain NCTC 10247).